Consider the following 190-residue polypeptide: B3 domain-containing protein At4g01580 (190 aa).

The tract at residues 1 to 25 (MVITRNMKARATSVSHRQSQQDPES) is disordered. Over residues 12–23 (TSVSHRQSQQDP) the composition is skewed to polar residues. The segment at residues 29-122 (KFFKLVLPST…SFRVIIFNAS (94 aa)) is a DNA-binding region (TF-B3).

Its subcellular location is the nucleus. In Arabidopsis thaliana (Mouse-ear cress), this protein is B3 domain-containing protein At4g01580.